The primary structure comprises 213 residues: Mite allergen Der f 7 (213 aa).

The signal sequence occupies residues 1-17; it reads MMKFLLIAAVAFVAVSA. Residue N151 is glycosylated (N-linked (GlcNAc...) asparagine).

It belongs to the mite group 7 allergen family.

It is found in the secreted. The polypeptide is Mite allergen Der f 7 (DERF7) (Dermatophagoides farinae (American house dust mite)).